The primary structure comprises 393 residues: Formate-dependent phosphoribosylglycinamide formyltransferase (393 aa).

N(1)-(5-phospho-beta-D-ribosyl)glycinamide contacts are provided by residues 17 to 18 (EL) and Glu77. ATP contacts are provided by residues Arg109, Lys150, 155 to 160 (SSGKGQ), 190 to 193 (EEFL), and Glu198. The ATP-grasp domain maps to 114–304 (DLAAGELGLR…EFELHLRAVL (191 aa)). Mg(2+)-binding residues include Glu263 and Glu275. Residues Asp282, Lys354, and 361 to 362 (RR) each bind N(1)-(5-phospho-beta-D-ribosyl)glycinamide.

The protein belongs to the PurK/PurT family. As to quaternary structure, homodimer.

The catalysed reaction is N(1)-(5-phospho-beta-D-ribosyl)glycinamide + formate + ATP = N(2)-formyl-N(1)-(5-phospho-beta-D-ribosyl)glycinamide + ADP + phosphate + H(+). The protein operates within purine metabolism; IMP biosynthesis via de novo pathway; N(2)-formyl-N(1)-(5-phospho-D-ribosyl)glycinamide from N(1)-(5-phospho-D-ribosyl)glycinamide (formate route): step 1/1. Involved in the de novo purine biosynthesis. Catalyzes the transfer of formate to 5-phospho-ribosyl-glycinamide (GAR), producing 5-phospho-ribosyl-N-formylglycinamide (FGAR). Formate is provided by PurU via hydrolysis of 10-formyl-tetrahydrofolate. The protein is Formate-dependent phosphoribosylglycinamide formyltransferase of Synechococcus sp. (strain RCC307).